The sequence spans 385 residues: Podocin (385 aa).

Residues 1–27 (MDSRARSSSREAHGRSSRSSSRDDKKA) show a composition bias toward basic and acidic residues. The interval 1–64 (MDSRARSSSR…GEPRAPAATA (64 aa)) is disordered. Residues 1 to 104 (MDSRARSSSR…IKPSGLGACE (104 aa)) are Cytoplasmic-facing. Residue Cys-103 is the site of S-palmitoyl cysteine attachment. Residues 105–125 (WLLVLASLIFIIMTFPFSIWF) form a helical membrane-spanning segment. Residues 126 to 385 (CIKVVQEYER…NPKKKDSPML (260 aa)) are Extracellular-facing. Residues 357-370 (NRAQGSINYPSSSK) show a composition bias toward polar residues. The segment at 357–385 (NRAQGSINYPSSSKPVEPLNPKKKDSPML) is disordered. A compositionally biased stretch (basic and acidic residues) spans 376-385 (NPKKKDSPML).

This sequence belongs to the band 7/mec-2 family. Interacts with nephrin/NPHS1, KIRRL1 and CD2AP. Interacts with DDN.

The protein resides in the membrane. Plays a role in the regulation of glomerular permeability, acting probably as a linker between the plasma membrane and the cytoskeleton. The sequence is that of Podocin (Nphs2) from Mus musculus (Mouse).